We begin with the raw amino-acid sequence, 77 residues long: Acyl carrier protein (77 aa).

In terms of domain architecture, Carrier spans Ser-2–Gln-77. An O-(pantetheine 4'-phosphoryl)serine modification is found at Ser-37.

Belongs to the acyl carrier protein (ACP) family. In terms of processing, 4'-phosphopantetheine is transferred from CoA to a specific serine of apo-ACP by AcpS. This modification is essential for activity because fatty acids are bound in thioester linkage to the sulfhydryl of the prosthetic group.

It is found in the cytoplasm. Its pathway is lipid metabolism; fatty acid biosynthesis. Its function is as follows. Carrier of the growing fatty acid chain in fatty acid biosynthesis. The protein is Acyl carrier protein of Leucothrix mucor.